The chain runs to 107 residues: Large ribosomal subunit protein uL24 (107 aa).

The protein belongs to the universal ribosomal protein uL24 family. As to quaternary structure, part of the 50S ribosomal subunit.

In terms of biological role, one of two assembly initiator proteins, it binds directly to the 5'-end of the 23S rRNA, where it nucleates assembly of the 50S subunit. Functionally, one of the proteins that surrounds the polypeptide exit tunnel on the outside of the subunit. The protein is Large ribosomal subunit protein uL24 of Malacoplasma penetrans (strain HF-2) (Mycoplasma penetrans).